A 291-amino-acid polypeptide reads, in one-letter code: Dihydroorotate dehydrogenase A (fumarate) (291 aa).

FMN contacts are provided by residues serine 18 and 42–43 (KS). Residues lysine 42, 66–70 (NAVGL), and asparagine 126 each bind substrate. Asparagine 126 contributes to the FMN binding site. The active-site Nucleophile is the cysteine 129. Positions 164 and 190 each coordinate FMN. 191-192 (NT) lines the substrate pocket. FMN-binding positions include glycine 216, 242–243 (GG), and 264–265 (GS).

This sequence belongs to the dihydroorotate dehydrogenase family. Type 1 subfamily. Homodimer. FMN serves as cofactor.

It is found in the cytoplasm. It catalyses the reaction (S)-dihydroorotate + fumarate = orotate + succinate. It functions in the pathway pyrimidine metabolism; UMP biosynthesis via de novo pathway. Catalyzes the conversion of dihydroorotate to orotate with fumarate as the electron acceptor. The chain is Dihydroorotate dehydrogenase A (fumarate) (pyrD) from Lacticaseibacillus paracasei (strain ATCC 334 / BCRC 17002 / CCUG 31169 / CIP 107868 / KCTC 3260 / NRRL B-441) (Lactobacillus paracasei).